The sequence spans 293 residues: Large ribosomal subunit protein uL4 (293 aa).

2 stretches are compositionally biased toward basic and acidic residues: residues 1–14 (MAEE…EKTP) and 33–55 (KTTE…ESTK). Disordered regions lie at residues 1 to 72 (MAEE…IKSE) and 130 to 166 (QRQG…STRS).

Belongs to the universal ribosomal protein uL4 family. Part of the 50S ribosomal subunit.

Its function is as follows. One of the primary rRNA binding proteins, this protein initially binds near the 5'-end of the 23S rRNA. It is important during the early stages of 50S assembly. It makes multiple contacts with different domains of the 23S rRNA in the assembled 50S subunit and ribosome. Functionally, forms part of the polypeptide exit tunnel. This chain is Large ribosomal subunit protein uL4, found in Mycoplasma mobile (strain ATCC 43663 / 163K / NCTC 11711) (Mesomycoplasma mobile).